The chain runs to 311 residues: Putative ABC transporter ATP-binding protein MG467 (311 aa).

Residues Ile-84 to Leu-310 enclose the ABC transporter domain. Residue Gly-122–Thr-129 coordinates ATP.

The protein belongs to the ABC transporter superfamily.

This Mycoplasma genitalium (strain ATCC 33530 / DSM 19775 / NCTC 10195 / G37) (Mycoplasmoides genitalium) protein is Putative ABC transporter ATP-binding protein MG467.